A 197-amino-acid chain; its full sequence is Putative NADH dehydrogenase/NAD(P)H nitroreductase Plav_3612 (197 aa).

It belongs to the nitroreductase family. HadB/RutE subfamily. It depends on FMN as a cofactor.

This Parvibaculum lavamentivorans (strain DS-1 / DSM 13023 / NCIMB 13966) protein is Putative NADH dehydrogenase/NAD(P)H nitroreductase Plav_3612.